A 129-amino-acid chain; its full sequence is Small ribosomal subunit protein uS9 (129 aa).

The protein belongs to the universal ribosomal protein uS9 family.

The chain is Small ribosomal subunit protein uS9 from Chlorobium limicola (strain DSM 245 / NBRC 103803 / 6330).